The primary structure comprises 1842 residues: Fatty acid synthase alpha subunit pigJ (1842 aa).

Residues 120–184 (GAPVEEEGSK…TPAGGSTTPD (65 aa)) form a disordered region. Residues 140–175 (SGSSRTATTAKATVTTPSSSSPETAPPAASTPSQGT) show a composition bias toward low complexity. One can recognise a Carrier domain in the interval 184–262 (DIPLSAKHVV…DALQGNFPGK (79 aa)). The residue at position 222 (Ser222) is an O-(pantetheine 4'-phosphoryl)serine. The segment at 611–807 (GKTVLVTGAG…CGAAIGWVRG (197 aa)) is beta-ketoacyl reductase. In terms of domain architecture, Ketosynthase family 3 (KS3) spans 1058–1585 (KEFLQEIVVE…QKGGIAVVVA (528 aa)). Active-site for beta-ketoacyl synthase activity residues include Cys1244, His1470, and His1511. The disordered stretch occupies residues 1649–1672 (KARVGGHPENNNNNNNNSSSKRNT). The span at 1658 to 1668 (NNNNNNNNSSS) shows a compositional bias: low complexity. The Mg(2+) site is built by Asp1725, Val1726, and Glu1727. Acetyl-CoA is bound by residues 1725-1727 (DVE), Ser1761, 1770-1780 (EAVFKSLQTPS), and 1823-1825 (ITH). Thr1824 and His1825 together coordinate Mg(2+).

It belongs to the thiolase-like superfamily. Fungal fatty acid synthetase subunit alpha family. As to quaternary structure, [Alpha(6)beta(6)] hexamers of two multifunctional subunits (alpha and beta).

The catalysed reaction is acetyl-CoA + n malonyl-CoA + 2n NADPH + 4n H(+) = a long-chain-acyl-CoA + n CoA + n CO2 + 2n NADP(+).. It carries out the reaction a fatty acyl-[ACP] + malonyl-[ACP] + H(+) = a 3-oxoacyl-[ACP] + holo-[ACP] + CO2. The enzyme catalyses a (3R)-hydroxyacyl-[ACP] + NADP(+) = a 3-oxoacyl-[ACP] + NADPH + H(+). It participates in secondary metabolite biosynthesis. In terms of biological role, fatty acid synthase alpha subunit; part of the gene cluster that mediates the biosynthesis of azaphilone pigments (MonAzPs), a complex mixture of compounds with a common azaphilone skeleton very widely used as food colorants. PigJ and pigK form the two subunits of a dedicated fungal fatty acid synthase (FAS) that produces the side chain fatty acyl moiety of MonAzPs, a beta-keto fatty acid. The chain length control of the pigJ-pigK FAS is somewhat flexible as MonAzPs features either a beta-ketooctanoic or a beta-ketodecanoic acid moiety. The beta-ketoacyl-ACP probably serves as the substrate for the acetyltransferase pigD that directly transfers the fatty acyl chain to the C-4 alcohol of the pyran ring. The first step of the pathway is performed by the nrPKS pigA that forms the hexaketide precursor from successive condensations of five malonyl-CoA units, with a simple acetyl-CoA starter unit. The role of esterase pigG is not clear, but it may play at most a supplementary role in the formation of the benzaldehyde produced by the pigA nrPKS. This very reactive benzaldehyde is intercepted by the pigC ketoreductase that to provide the first stable enzyme-free MonAzPs intermediate, 6-(4-hydroxy-2-oxopentyl)-3-methyl-2,4-dioxocyclohexane carbaldehyde, also known as M7PKS-1. The FAD-dependent monooxygenase pigN hydroxylates M7PKS-1 at C-4, which triggers the formation of the pyran ring. PigJ, pigK and pigD are involved in the acetylation of the pyran ring. PigJ and pigK form the two subunits of a dedicated fungal FAS that produces the side chain fatty acyl moiety of MonAzPs and pigD transfers the fatty acyl chain to the C-4 alcohol. PigM and pigO are involved in the elimination of the omega-1 alcohol. PigM acts as an O-acetyltransferase that synthesizes the putative O-11 acetyl intermediate whereas pigO eliminates acetic acid to yield an intermediate with a C10(11) double bond. The dehydration of the C-11 alcohol followed by the reduction of the C6(7) double bond by the NAD(P)H-dependent oxidoreductase pigE increases the electrophilicity of the C-5 ketone of the resulting acyl benzopyran. This in turn sets up the C-5 ketone for an intramolecular Knoevenagel aldol condensation with the C-20 enol of the side chain. This condensation affords the characteristic linear tricyclic carbon skeletons of the yellow pigments that serve as the common precursors for the classical yellow pigments monascin and ankaflavin, orange pigments rubopunctatin and monascorubrin, and red pigments ribropunctamine and monascorubramine. The FAD-dependent oxidoreductase pigF is especially invoved in the biosynthesis of orange and red pigments via desaturation of C6(7). The protein is Fatty acid synthase alpha subunit pigJ of Monascus ruber (Mold).